Consider the following 248-residue polypeptide: Protein PIMREG (248 aa).

The segment covering 1–10 (MASRWQNMGT) has biased composition (polar residues). A disordered region spans residues 1–32 (MASRWQNMGTSVRRRSLQHQEQLEDSKELQPV). Phosphoserine is present on residues S11 and S16. 2 consecutive short sequence motifs (D-box) follow at residues 14–17 (RRSL) and 53–56 (RLPL). Positions 117–205 (KARRRKRGAQ…PSESDSDLEP (89 aa)) are disordered. Residue S129 is modified to Phosphoserine. S131 carries the phosphoserine; by UHMK1; in vitro modification. Composition is skewed to polar residues over residues 132-143 (PTHSLSQKSTRL) and 186-198 (PYSS…SPSE). Residues S199 and S201 each carry the phosphoserine modification.

As to quaternary structure, isoform 1 and isoform 2 interact with PICALM; this interaction may target PICALM to the nucleus. During mitosis, associates with HDAC2 and MTA2 subunits of the chromatin-remodeling NuRD complex; this association is strongest at prometaphase and decreases as the cell progresses through metaphase and anaphase. Ubiquitinated by the anaphase-promoting complex/cyclosome (APC/C) complex in the presence of FZR1, leading to its degradation by the proteasome during mitotic exit. However, degradation is not essential for normal mitotic progression within a single cell cycle. Expressed in thymus (at protein level). Detected in spleen, colon, ovary and small intestines.

It is found in the nucleus. The protein localises to the nucleolus. Functionally, during mitosis, may play a role in the control of metaphase-to-anaphase transition. This is Protein PIMREG from Homo sapiens (Human).